We begin with the raw amino-acid sequence, 333 residues long: Beta-ketoacyl-[acyl-carrier-protein] synthase III (333 aa).

Catalysis depends on residues C117 and H257. Residues 258 to 262 are ACP-binding; it reads QANLR. Residue N287 is part of the active site.

The protein belongs to the thiolase-like superfamily. FabH family. In terms of assembly, homodimer.

Its subcellular location is the cytoplasm. The catalysed reaction is malonyl-[ACP] + acetyl-CoA + H(+) = 3-oxobutanoyl-[ACP] + CO2 + CoA. Its pathway is lipid metabolism; fatty acid biosynthesis. In terms of biological role, catalyzes the condensation reaction of fatty acid synthesis by the addition to an acyl acceptor of two carbons from malonyl-ACP. Catalyzes the first condensation reaction which initiates fatty acid synthesis and may therefore play a role in governing the total rate of fatty acid production. Possesses both acetoacetyl-ACP synthase and acetyl transacylase activities. Its substrate specificity determines the biosynthesis of branched-chain and/or straight-chain of fatty acids. This chain is Beta-ketoacyl-[acyl-carrier-protein] synthase III, found in Azobacteroides pseudotrichonymphae genomovar. CFP2.